A 195-amino-acid polypeptide reads, in one-letter code: Ribosomal RNA small subunit methyltransferase G (195 aa).

Residues Gly-60, Leu-65, 114-115 (IE), and Arg-128 each bind S-adenosyl-L-methionine.

It belongs to the methyltransferase superfamily. RNA methyltransferase RsmG family.

The protein localises to the cytoplasm. The enzyme catalyses guanosine(527) in 16S rRNA + S-adenosyl-L-methionine = N(7)-methylguanosine(527) in 16S rRNA + S-adenosyl-L-homocysteine. Specifically methylates the N7 position of guanine in position 527 of 16S rRNA. The chain is Ribosomal RNA small subunit methyltransferase G from Dinoroseobacter shibae (strain DSM 16493 / NCIMB 14021 / DFL 12).